Here is a 23-residue protein sequence, read N- to C-terminus: Potassium channel toxin alpha-KTx 13.1 (23 aa).

Cystine bridges form between Cys-2-Cys-15, Cys-5-Cys-20, and Cys-9-Cys-22. The tract at residues 13–20 is interaction with Ca(2+)-activated K(+) channels; sequence GKCINGRC.

Expressed by the venom gland.

The protein localises to the secreted. Its function is as follows. Blocks reversibly Shaker B potassium channels. Also displaces binding of noxiustoxin to mouse brain synaptosome membranes. In Tityus obscurus (Amazonian scorpion), this protein is Potassium channel toxin alpha-KTx 13.1.